The primary structure comprises 1412 residues: DNA-directed RNA polymerase subunit beta' (1412 aa).

Zn(2+) contacts are provided by Cys70, Cys72, Cys85, and Cys88. Asp460, Asp462, and Asp464 together coordinate Mg(2+). Cys819, Cys893, Cys900, and Cys903 together coordinate Zn(2+). The tract at residues 1392–1412 (EEAFEFGTPSTPAEEPQHPAE) is disordered.

Belongs to the RNA polymerase beta' chain family. The RNAP catalytic core consists of 2 alpha, 1 beta, 1 beta' and 1 omega subunit. When a sigma factor is associated with the core the holoenzyme is formed, which can initiate transcription. Mg(2+) is required as a cofactor. Zn(2+) serves as cofactor.

The enzyme catalyses RNA(n) + a ribonucleoside 5'-triphosphate = RNA(n+1) + diphosphate. Its function is as follows. DNA-dependent RNA polymerase catalyzes the transcription of DNA into RNA using the four ribonucleoside triphosphates as substrates. In Burkholderia thailandensis (strain ATCC 700388 / DSM 13276 / CCUG 48851 / CIP 106301 / E264), this protein is DNA-directed RNA polymerase subunit beta'.